A 309-amino-acid polypeptide reads, in one-letter code: Probable pyridoxal 5'-phosphate synthase subunit PDX1 (309 aa).

A D-ribose 5-phosphate-binding site is contributed by D40. K97 acts as the Schiff-base intermediate with D-ribose 5-phosphate in catalysis. G169 contacts D-ribose 5-phosphate. R181 contributes to the D-glyceraldehyde 3-phosphate binding site. Residues G230 and 251-252 (GS) each bind D-ribose 5-phosphate.

The protein belongs to the PdxS/SNZ family.

The enzyme catalyses aldehydo-D-ribose 5-phosphate + D-glyceraldehyde 3-phosphate + L-glutamine = pyridoxal 5'-phosphate + L-glutamate + phosphate + 3 H2O + H(+). The protein operates within cofactor biosynthesis; pyridoxal 5'-phosphate biosynthesis. Catalyzes the formation of pyridoxal 5'-phosphate from ribose 5-phosphate (RBP), glyceraldehyde 3-phosphate (G3P) and ammonia. The ammonia is provided by PDX2. Can also use ribulose 5-phosphate and dihydroxyacetone phosphate as substrates, resulting from enzyme-catalyzed isomerization of RBP and G3P, respectively. Also plays an indirect role in resistance to singlet oxygen-generating photosensitizers. The protein is Probable pyridoxal 5'-phosphate synthase subunit PDX1 (PDX1) of Hevea brasiliensis (Para rubber tree).